The primary structure comprises 190 residues: Recombination protein RecR (190 aa).

The C4-type zinc-finger motif lies at 58 to 73; sequence CEQCGALSENELCEIC. The 87-residue stretch at 81 to 167 folds into the Toprim domain; the sequence is NILCIVESPK…TFSKIAQGIP (87 aa).

It belongs to the RecR family.

Its function is as follows. May play a role in DNA repair. It seems to be involved in an RecBC-independent recombinational process of DNA repair. It may act with RecF and RecO. This Campylobacter jejuni subsp. doylei (strain ATCC BAA-1458 / RM4099 / 269.97) protein is Recombination protein RecR.